Here is a 445-residue protein sequence, read N- to C-terminus: Protein kinase C and casein kinase substrate in neurons protein 1 (445 aa).

The F-BAR domain maps to 12–282 (DETTDSFWEV…TIVSASAQED (271 aa)). Coiled-coil stretches lie at residues 146 to 167 (AKKL…KEEK) and 183 to 219 (TTDQ…NKCT). A disordered region spans residues 327–390 (LTQVTHGAEH…PFEEDSKGVR (64 aa)). Polar residues-rich tracts occupy residues 338–358 (TPQT…QYSA) and 368–379 (TAAQSASETNGG). The SH3 domain maps to 386–445 (SKGVRVRALYDYEGQEQDELTFKAGDELTKLEDEDEQGWCKGRLDSGQLGLYPANYVEPV).

As to quaternary structure, interacts with cobl.

It is found in the cytoplasm. Its subcellular location is the cytosol. It localises to the cell membrane. The protein resides in the cell projection. The protein localises to the synapse. It is found in the synaptosome. Its subcellular location is the cytoplasmic vesicle membrane. It localises to the ruffle membrane. The protein resides in the membrane. In terms of biological role, binds to membranes via its F-BAR domain and mediates membrane tubulation. Plays a role in cellular transport processes by recruiting dynamins to membranes. Plays a role in the reorganization of the actin cytoskeleton and in neuron morphogenesis via its interaction with cobl, and by recruiting cobl to the cell cortex. Plays a role in the regulation of neurite formation, neurite branching and the regulation of neurite length. Required for normal synaptic vesicle endocytosis; this process retrieves previously released neurotransmitters to accommodate multiple cycles of neurotransmission. Required for normal excitatory and inhibitory synaptic transmission. Required for normal embryonic development, including normal development of laterality, normal body size and shape, as well as normal brain and heart development. Required for normal development of stereocilia and kinocilia in sensory hair cells of neuromasts in the posterior lateral line organ, and thus also for balance keeping and normal swimming behavior. The polypeptide is Protein kinase C and casein kinase substrate in neurons protein 1 (pacsin1b) (Danio rerio (Zebrafish)).